The following is a 256-amino-acid chain: uncharacterized protein (256 aa).

7 helical membrane passes run 32-52, 59-79, 112-132, 156-176, 184-204, 207-227, and 230-250; these read ILASIFIGFGITAASKTGSYF, FAFPAAAVTFGAAILMIAYGG, YAGNLIGAILFAILISATGLF, LFFRGMLCNWLVCLAFFIPMS, LFTMMLFVFCFFISGFEHSIA, CTFAISLLIEHPDTVTLMGAV, and LIPVTLGNLTAGIVMMGWMYY.

This sequence belongs to the FNT transporter (TC 1.A.16) family.

The protein localises to the cell membrane. This is an uncharacterized protein from Bacillus subtilis (strain 168).